The primary structure comprises 247 residues: Adenosylcobinamide-GDP ribazoletransferase (247 aa).

The next 5 helical transmembrane spans lie at 34–54, 59–79, 113–133, 138–158, and 194–214; these read IITF…VFMV, CGVP…TGGF, GGLA…ELAL, ILAS…LLMY, and VLLP…AIFI.

The protein belongs to the CobS family. Mg(2+) serves as cofactor.

It localises to the cell inner membrane. The enzyme catalyses alpha-ribazole + adenosylcob(III)inamide-GDP = adenosylcob(III)alamin + GMP + H(+). The catalysed reaction is alpha-ribazole 5'-phosphate + adenosylcob(III)inamide-GDP = adenosylcob(III)alamin 5'-phosphate + GMP + H(+). Its pathway is cofactor biosynthesis; adenosylcobalamin biosynthesis; adenosylcobalamin from cob(II)yrinate a,c-diamide: step 7/7. Functionally, joins adenosylcobinamide-GDP and alpha-ribazole to generate adenosylcobalamin (Ado-cobalamin). Also synthesizes adenosylcobalamin 5'-phosphate from adenosylcobinamide-GDP and alpha-ribazole 5'-phosphate. This chain is Adenosylcobinamide-GDP ribazoletransferase, found in Escherichia coli O7:K1 (strain IAI39 / ExPEC).